A 337-amino-acid chain; its full sequence is MRLVFAGTPAVALPSLRALIDSPRHDVVAVVTRPDRPSGRGRKVKPPPVHVLADEAGIPVLSPDRPRDPEFLATLAGLAPDCCPVVAYGALLPPAALAIPRHGWVNLHFSLLPAYRGAAPVQRTLLAGDDLTGASVFQIEPAMDSGPVYGVLTERVRPTDTSGDLLDRLAEAGAGLLVAVMDGIADGTVRPVAQPAEGISFAPKLTAEEARIDWTKPAIAVDRLARAATPAPGAWTTFRDRRLKIGPVRLGAVSGRPAGPVALPAGLPAGGLPAGQIMVLPGGDVAVGTGTSPVLLGEVRPEGRGPMAAAAWARGVRIAKGETLGAIGAMPVSGGTS.

110–113 (SLLP) lines the (6S)-5,6,7,8-tetrahydrofolate pocket.

It belongs to the Fmt family.

It carries out the reaction L-methionyl-tRNA(fMet) + (6R)-10-formyltetrahydrofolate = N-formyl-L-methionyl-tRNA(fMet) + (6S)-5,6,7,8-tetrahydrofolate + H(+). Its function is as follows. Attaches a formyl group to the free amino group of methionyl-tRNA(fMet). The formyl group appears to play a dual role in the initiator identity of N-formylmethionyl-tRNA by promoting its recognition by IF2 and preventing the misappropriation of this tRNA by the elongation apparatus. This chain is Methionyl-tRNA formyltransferase, found in Frankia casuarinae (strain DSM 45818 / CECT 9043 / HFP020203 / CcI3).